The chain runs to 113 residues: Large ribosomal subunit protein bL19 (113 aa).

The protein belongs to the bacterial ribosomal protein bL19 family.

This protein is located at the 30S-50S ribosomal subunit interface and may play a role in the structure and function of the aminoacyl-tRNA binding site. The chain is Large ribosomal subunit protein bL19 from Mycolicibacterium gilvum (strain PYR-GCK) (Mycobacterium gilvum (strain PYR-GCK)).